The chain runs to 40 residues: Large ribosomal subunit protein bL36 (40 aa).

It belongs to the bacterial ribosomal protein bL36 family.

This chain is Large ribosomal subunit protein bL36, found in Corynebacterium kroppenstedtii (strain DSM 44385 / JCM 11950 / CIP 105744 / CCUG 35717).